Here is a 232-residue protein sequence, read N- to C-terminus: Orotidine 5'-phosphate decarboxylase (232 aa).

Substrate contacts are provided by residues D13, K35, 62–71 (DLKFHDIPNT), T122, R182, Q191, G211, and R212. Catalysis depends on K64, which acts as the Proton donor.

The protein belongs to the OMP decarboxylase family. Type 1 subfamily. In terms of assembly, homodimer.

It carries out the reaction orotidine 5'-phosphate + H(+) = UMP + CO2. Its pathway is pyrimidine metabolism; UMP biosynthesis via de novo pathway; UMP from orotate: step 2/2. In terms of biological role, catalyzes the decarboxylation of orotidine 5'-monophosphate (OMP) to uridine 5'-monophosphate (UMP). This Pseudomonas savastanoi pv. phaseolicola (strain 1448A / Race 6) (Pseudomonas syringae pv. phaseolicola (strain 1448A / Race 6)) protein is Orotidine 5'-phosphate decarboxylase.